The following is an 82-amino-acid chain: Turripeptide Gsp9.1 (82 aa).

The first 23 residues, 1–23 (MMAKLMITVMMVLLLSLQQGADG), serve as a signal peptide directing secretion. Residues 24–46 (RSKRWRKNQMAASSIMRNLITAR) constitute a propeptide that is removed on maturation. Residues Pro-49 and Pro-50 each carry the 4-hydroxyproline modification. Intrachain disulfides connect Cys-53/Cys-68, Cys-58/Cys-72, and Cys-64/Cys-79. Glu-60 and Glu-63 each carry 4-carboxyglutamate.

This sequence belongs to the Pg turripeptide superfamily. Expressed by the venom duct.

It is found in the secreted. The polypeptide is Turripeptide Gsp9.1 (Gemmula speciosa (Splendid gem-turris)).